Here is a 60-residue protein sequence, read N- to C-terminus: Protein YmjC (60 aa).

Residues 40-60 (HKPYPTNKMQTTSGKKVIQDR) form a disordered region.

In Escherichia coli (strain K12), this protein is Protein YmjC (ymjC).